A 298-amino-acid polypeptide reads, in one-letter code: uncharacterized protein (298 aa).

Residues 194-295 enclose the HTH araC/xylS-type domain; the sequence is KRLNTALIAI…QLSPSQYRKS (102 aa). DNA-binding regions (H-T-H motif) lie at residues 214–235 and 262–285; these read EQLA…QQHI and VLAI…KNYY.

This is an uncharacterized protein from Haemophilus influenzae (strain ATCC 51907 / DSM 11121 / KW20 / Rd).